The primary structure comprises 416 residues: Enterobactin exporter EntS (416 aa).

At 1-21 the chain is on the cytoplasmic side; the sequence is MNKQSWLLNLSLLKTHPAFRA. A helical transmembrane segment spans residues 22 to 42; it reads VFLARFISIVSLGLLGVAVPV. The Periplasmic segment spans residues 43 to 55; sequence QIQMMTHSTWQVG. A helical membrane pass occupies residues 56–76; that stretch reads LSVTLTGGAMFVGLMVGGVLA. Residues 77–83 lie on the Cytoplasmic side of the membrane; the sequence is DRYERKK. A helical membrane pass occupies residues 84-104; sequence VILLARGTCGIGFIGLCLNAL. Residues 105–109 are Periplasmic-facing; sequence LPEPS. Residues 110–130 form a helical membrane-spanning segment; sequence LLAIYLLGLWDGFFASLGVTA. Residues 131–156 are Cytoplasmic-facing; it reads LLAATPALVGRENLMQAGALTMLTVR. A helical transmembrane segment spans residues 157–177; that stretch reads LGSVISPMIGGLLLATGGVAW. Position 178 (N178) is a topological domain, periplasmic. Residues 179-199 form a helical membrane-spanning segment; that stretch reads YGLAAAGTFITLLPLLSLPAL. The Cytoplasmic portion of the chain corresponds to 200-218; that stretch reads PPPPQPREHPLKSLLAGFR. A helical membrane pass occupies residues 219–239; that stretch reads FLLASPLVGGIALLGGLLTMA. Over 240 to 256 the chain is Periplasmic; sequence SAVRVLYPALADNWQMS. A helical transmembrane segment spans residues 257 to 277; that stretch reads AAEIGFLYAAIPLGAAIGALT. Over 278–287 the chain is Cytoplasmic; sequence SGKLAHSARP. A helical membrane pass occupies residues 288–307; that stretch reads GLLMLLSTLGSFLAIGLFGL. The Periplasmic segment spans residues 308–313; the sequence is MPMWIL. The chain crosses the membrane as a helical span at residues 314–336; that stretch reads GVVCLALFGWLSAVSSLLQYTML. Residues 337 to 356 are Cytoplasmic-facing; it reads QTQTPEAMLGRINGLWTAQN. Residues 357-377 form a helical membrane-spanning segment; the sequence is VTGDAIGAALLGGLGAMMTPV. A topological domain (periplasmic) is located at residue A378. The helical transmembrane segment at 379–399 threads the bilayer; that stretch reads SASASGFGLLIIGVLLLLVLV. The Cytoplasmic segment spans residues 400–416; the sequence is ELRRFRQTPPQVTASDS.

Belongs to the major facilitator superfamily. EntS (TC 2.A.1.38) family.

It localises to the cell inner membrane. In terms of biological role, component of an export pathway for enterobactin. In Shigella boydii serotype 18 (strain CDC 3083-94 / BS512), this protein is Enterobactin exporter EntS.